The sequence spans 481 residues: PRAME family member 22 (481 aa).

One copy of the LRR 1; degenerate repeat lies at 99-126; that stretch reads RWKLQVLELRDVDENFWTIWSGARPLSC. The stretch at 181 to 205 is one LRR 2; degenerate repeat; the sequence is HLCCTKVVNYSMSILNFRNILETVY. Residues 206–232 form an LRR 3; degenerate repeat; the sequence is PDSIQVLEIWNMCWPCMIVEFSRYLSQ. Residues 233-267 form an LRR 4; degenerate repeat; that stretch reads MRNLRKLFISDGCRYLLSSDSQEQLVAEFSSVLLR. 5 LRR repeats span residues 268–293, 294–325, 326–344, 350–377, and 378–402; these read LEYL…IRCL, RSPL…SQLK, QLNL…PLRA, AATL…ALSC, and CSNL…LLRH.

The protein belongs to the PRAME family.

This is PRAME family member 22 from Homo sapiens (Human).